A 444-amino-acid chain; its full sequence is Sensor protein CiaH (444 aa).

A run of 2 helical transmembrane segments spans residues 21-41 and 183-203; these read FGVF…VMHS and LIVV…LYLA. Positions 223–438 constitute a Histidine kinase domain; that stretch reads NASHELRTPL…IFEVKIAIQT (216 aa). Position 226 is a phosphohistidine; by autocatalysis (His-226).

It is found in the cell membrane. The enzyme catalyses ATP + protein L-histidine = ADP + protein N-phospho-L-histidine.. Member of the two-component regulatory system CiaH/CiaR. Involved in early steps of competence regulation and in penicillin susceptibility. Probably phosphorylates CiaR. The protein is Sensor protein CiaH (ciaH) of Streptococcus pneumoniae serotype 4 (strain ATCC BAA-334 / TIGR4).